An 87-amino-acid chain; its full sequence is uncharacterized protein (87 aa).

The signal sequence occupies residues 1–25 (MKIRKILLSSALSFGMLISAVPALA).

This is an uncharacterized protein from Bacillus subtilis (strain 168).